We begin with the raw amino-acid sequence, 138 residues long: ATP synthase epsilon chain (138 aa).

This sequence belongs to the ATPase epsilon chain family. As to quaternary structure, F-type ATPases have 2 components, CF(1) - the catalytic core - and CF(0) - the membrane proton channel. CF(1) has five subunits: alpha(3), beta(3), gamma(1), delta(1), epsilon(1). CF(0) has three main subunits: a, b and c.

Its subcellular location is the cell inner membrane. Its function is as follows. Produces ATP from ADP in the presence of a proton gradient across the membrane. This Citrifermentans bemidjiense (strain ATCC BAA-1014 / DSM 16622 / JCM 12645 / Bem) (Geobacter bemidjiensis) protein is ATP synthase epsilon chain.